A 299-amino-acid chain; its full sequence is Bifunctional protein FolD 1 (299 aa).

NADP(+)-binding positions include 168 to 170, S193, and I234; that span reads GRS.

It belongs to the tetrahydrofolate dehydrogenase/cyclohydrolase family. As to quaternary structure, homodimer.

It carries out the reaction (6R)-5,10-methylene-5,6,7,8-tetrahydrofolate + NADP(+) = (6R)-5,10-methenyltetrahydrofolate + NADPH. The catalysed reaction is (6R)-5,10-methenyltetrahydrofolate + H2O = (6R)-10-formyltetrahydrofolate + H(+). It participates in one-carbon metabolism; tetrahydrofolate interconversion. In terms of biological role, catalyzes the oxidation of 5,10-methylenetetrahydrofolate to 5,10-methenyltetrahydrofolate and then the hydrolysis of 5,10-methenyltetrahydrofolate to 10-formyltetrahydrofolate. This is Bifunctional protein FolD 1 from Rhizobium etli (strain ATCC 51251 / DSM 11541 / JCM 21823 / NBRC 15573 / CFN 42).